Reading from the N-terminus, the 400-residue chain is Enoyl-[acyl-carrier-protein] reductase [NADH] (400 aa).

NAD(+) is bound by residues 48–53, 74–75, 111–112, and 139–140; these read GASTGY, FE, DA, and LA. Residue Tyr225 coordinates substrate. Residue Tyr235 is the Proton donor of the active site. Residues Lys244 and 273–275 each bind NAD(+); that span reads VVT.

It belongs to the TER reductase family. Monomer.

The catalysed reaction is a 2,3-saturated acyl-[ACP] + NAD(+) = a (2E)-enoyl-[ACP] + NADH + H(+). It participates in lipid metabolism; fatty acid biosynthesis. Functionally, involved in the final reduction of the elongation cycle of fatty acid synthesis (FAS II). Catalyzes the reduction of a carbon-carbon double bond in an enoyl moiety that is covalently linked to an acyl carrier protein (ACP). The polypeptide is Enoyl-[acyl-carrier-protein] reductase [NADH] (Burkholderia multivorans (strain ATCC 17616 / 249)).